Consider the following 484-residue polypeptide: Putative tyramine receptor 2 (484 aa).

The Extracellular segment spans residues 1 to 54 (MVRVELQAASLMNGSSAAEEPQDALVGGDACGGRRPPSVLGVRLAVPEWEVAVT). N-linked (GlcNAc...) asparagine glycosylation occurs at Asn13. Residues 55–77 (AVSLSLIILITIVGNVLVVLSVF) form a helical membrane-spanning segment. At 78–87 (TYKPLRIVQN) the chain is on the cytoplasmic side. Residues 88–109 (FFIVSLAVADLTVAVLVMPFNV) form a helical membrane-spanning segment. Topologically, residues 110–126 (AYSLIQRWVFGIVVCKM) are extracellular. An intrachain disulfide couples Cys124 to Cys203. A helical transmembrane segment spans residues 127 to 147 (WLTCDVLCCTASILNLCAIAL). At 148–167 (DRYWAITDPINYAQKRTLRR) the chain is on the cytoplasmic side. A helical membrane pass occupies residues 168–190 (VLAMIAGVWLLSGVISSPPLIGW). Residues 191-215 (NDWPMEFNDTTPCQLTEEQGYVIYS) are Extracellular-facing. Asn198 carries an N-linked (GlcNAc...) asparagine glycan. A helical transmembrane segment spans residues 216–237 (SLGSFFIPLFIMTIVYVEIFIA). The Cytoplasmic segment spans residues 238 to 411 (TKRRLRERAK…LSKERRAART (174 aa)). The span at 253–280 (SAMKQQMAAQAVPSSVPSHDQESVSSET) shows a compositional bias: polar residues. Disordered regions lie at residues 253-322 (SAMK…PAMV) and 350-383 (TTTT…PTPV). Over residues 295–306 (EKRRKTKKKSKK) the composition is skewed to basic residues. Over residues 350 to 360 (TTTTTTTTTTT) the composition is skewed to low complexity. Polar residues predominate over residues 361–378 (AVTDSPRSRTASQKGSTA). A helical transmembrane segment spans residues 412–433 (LGIIMGVFVVCWLPFFLMYVIV). The Extracellular segment spans residues 434–448 (PFCNPSCKPSPKLVN). A helical transmembrane segment spans residues 449–470 (FITWLGYINSALNPIIYTIFNL). The Cytoplasmic portion of the chain corresponds to 471–484 (DFRRAFKKLLHFKT).

This sequence belongs to the G-protein coupled receptor 1 family.

It is found in the cell membrane. Functionally, G-protein coupled receptor for tyramine, a known neurotransmitter and neuromodulator and direct precursor of octopamine. This is Putative tyramine receptor 2 (GCR2) from Locusta migratoria (Migratory locust).